Here is a 267-residue protein sequence, read N- to C-terminus: Beta-lactamase OXA-5 (267 aa).

Positions 1–19 (MKTIAAYLVLVFYASTALS) are cleaved as a signal peptide. Serine 67 functions as the Acyl-ester intermediate in the catalytic mechanism. Lysine 70 is subject to N6-carboxylysine. 205-207 (KTG) provides a ligand contact to substrate.

Belongs to the class-D beta-lactamase family.

It carries out the reaction a beta-lactam + H2O = a substituted beta-amino acid. Inhibited by clavulanic acid. Hydrolyzes both oxacillin and methicillin. This is Beta-lactamase OXA-5 (bla) from Pseudomonas aeruginosa.